We begin with the raw amino-acid sequence, 377 residues long: RCC1 domain-containing protein 1 (377 aa).

Residues 1–172 (MAEKRHGAWF…VRQLELGAEH (172 aa)) form an interaction with KDM8 region. The stretch at 6–57 (HGAWFGFGFCGFGQALGSGNSHHSVYSPEPLHASDDICQVSAGWSYTALVTR) is one RCC1 1 repeat. Arg-144 carries the post-translational modification (3R)-3-hydroxyarginine. RCC1 repeat units follow at residues 179–230 (AGQV…CLSE), 232–289 (GDIY…IAIQ), and 319–372 (TGEL…VYAM).

As to quaternary structure, found in a complex with KDM8. Interacts (via N-terminus) with KDM8 (via N-terminus). Specifically hydroxylated (with R stereochemistry) at C-3 of ARG-141 by KDM8.

The protein resides in the chromosome. Its function is as follows. Plays a role in transcriptional repression of satellite repeats, possibly by regulating H3K36 methylation levels in centromeric regions together with KDM8. Possibly together with KDM8, is involved in proper mitotic spindle organization and chromosome segregation. Plays a role in regulating alpha-tubulin deacetylation and cytoskeletal microtubule stability, thereby promoting cell migration and TGF-beta-induced epithelial to mesenchymal transition (EMT), potentially through the inhibition of KDM8. This Mus musculus (Mouse) protein is RCC1 domain-containing protein 1 (Rccd1).